A 445-amino-acid chain; its full sequence is MTMFENVTRALARQLNPRGDLTPLDSLIDFKRFHPFCLVLRKRKSTLFWGARYVRTDYTLLDVLEPGSSPSDPTDTGNFGFKNMLDTRVEGDVDVPKTVKVKGTAGLSQNSTLEVQTLSVAPKALETVQERKLAADHPFLKEMQDQGENLYVVMEVVETVQEVTLERAGKAEACFSLPFFAPLGLQGSINHKEAVTIPKGCVLAFRVRQLMVKGKDEWDIPHICNDNMQTFPPGEKSGEEKVILIQASDVGDVHEGFRTLKEEVQRETQQVEKLSRVGQSSLLSSLSKLLGKKKELQDLELALEGALDKGHEVTLEALPKDVLLSKEAVGAILYFVGALTELSEAQQKLLVKSMEKKILPVQLKLVESTMEQNFLLDKEGVFPLQPELLSSLGDEELTLTEALVGLSGLEVQRSGPQYMWDPDTLPRLCALYAGLSLLQQLTKAS.

The segment at 1–251 (MTMFENVTRA…VILIQASDVG (251 aa)) is triggers pyroptosis. 9–13 (RALAR) contacts a cardiolipin. A run of 4 beta stranded transmembrane segments spans residues 78-95 (NFGF…DVDV), 99-120 (VKVK…TLSV), 163-179 (VTLE…SLPF), and 183-197 (LGLQ…AVTI).

It belongs to the gasdermin family. Homooligomer; homooligomeric ring-shaped pore complex containing 18-36 subunits when inserted in the membrane. Cleavage by S.pyogenes SpeB relieves autoinhibition by releasing the N-terminal moiety (Gasdermin-A, N-terminal) that initiates pyroptosis. Post-translationally, palmitoylated. In terms of tissue distribution, expressed predominantly in the gastrointestinal tract and, at a lower level, in the skin. Also detected in mammary gland. In the gastrointestinal tract, mainly expressed in differentiated cells, including the differentiated cell layer of esophagus and mucus-secreting pit cells of the gastric epithelium. Down-regulated in gastric cancer cells.

It is found in the cytoplasm. It localises to the perinuclear region. Its subcellular location is the cytosol. The protein resides in the cell membrane. Its activity is regulated as follows. The full-length protein before cleavage is inactive: intramolecular interactions between N- and C-terminal domains mediate autoinhibition in the absence of activation signal. The intrinsic pyroptosis-inducing activity is carried by the released N-terminal moiety (Gasdermin-A, N-terminal) following cleavage by S.pyogenes effector protein SpeB. Functionally, this form constitutes the precursor of the pore-forming protein and acts as a sensor of infection: upon infection by S.pyogenes, specifically cleaved by S.pyogenes effector protein SpeB in epithelial cells, releasing the N-terminal moiety (Gasdermin-A, N-terminal) that binds to membranes and forms pores, triggering pyroptosis. In terms of biological role, pore-forming protein that causes membrane permeabilization and pyroptosis. Released upon cleavage by S.pyogenes effector protein SpeB, and binds to membrane inner leaflet lipids. Homooligomerizes within the membrane and forms pores of 10-15 nanometers (nm) of inner diameter, triggering pyroptosis. Pyroptosis triggers the elimination of the infected skin cell, depriving the pathogen of its protective niche, while inducing an inflammatory response. This ultimately prevents bacterial penetration of the epithelial barrier and a subsequent systemic dissemination of the pathogen. Binds to cardiolipin and other acidic phospholipids, such as phosphatidylserine, which mediate its targeting to the inner leaflet membrane. The chain is Gasdermin-A from Homo sapiens (Human).